We begin with the raw amino-acid sequence, 635 residues long: Threonine--tRNA ligase (635 aa).

The TGS domain occupies 1-61; the sequence is MVSIRLPDGS…DRDASLAIVT (61 aa). Residues 242-533 are catalytic; sequence DHRKLGKQLD…LIEHHAGAMP (292 aa). Residues Cys333, His384, and His510 each coordinate Zn(2+).

This sequence belongs to the class-II aminoacyl-tRNA synthetase family. As to quaternary structure, homodimer. Zn(2+) is required as a cofactor.

It localises to the cytoplasm. It catalyses the reaction tRNA(Thr) + L-threonine + ATP = L-threonyl-tRNA(Thr) + AMP + diphosphate + H(+). Catalyzes the attachment of threonine to tRNA(Thr) in a two-step reaction: L-threonine is first activated by ATP to form Thr-AMP and then transferred to the acceptor end of tRNA(Thr). Also edits incorrectly charged L-seryl-tRNA(Thr). This chain is Threonine--tRNA ligase, found in Burkholderia vietnamiensis (strain G4 / LMG 22486) (Burkholderia cepacia (strain R1808)).